Reading from the N-terminus, the 223-residue chain is Twisted gastrulation protein homolog 1 (223 aa).

An N-terminal signal peptide occupies residues 1–25 (MKLHYVAVLTLAILMFLTWLPASLS). N-linked (GlcNAc...) asparagine glycosylation is found at N52 and N81.

The protein belongs to the twisted gastrulation protein family. In terms of assembly, interacts with CHRD and BMP4. This interaction enhances CHRD/BMP4 complex formation. Interacts with BMP7.

The protein resides in the secreted. Its function is as follows. May be involved in dorsoventral axis formation. Seems to antagonize BMP signaling by forming ternary complexes with CHRD and BMPs, thereby preventing BMPs from binding to their receptors. In addition to the anti-BMP function, also has pro-BMP activity, partly mediated by cleavage and degradation of CHRD, which releases BMPs from ternary complexes. May be an important modulator of BMP-regulated cartilage development and chondrocyte differentiation. May play a role in thymocyte development. This is Twisted gastrulation protein homolog 1 (TWSG1) from Pongo abelii (Sumatran orangutan).